The primary structure comprises 366 residues: UDP-N-acetylglucosamine--N-acetylmuramyl-(pentapeptide) pyrophosphoryl-undecaprenol N-acetylglucosamine transferase (366 aa).

UDP-N-acetyl-alpha-D-glucosamine contacts are provided by residues 14–16 (TGG), Asn-128, Arg-169, Ser-201, Ile-251, and Gln-296.

It belongs to the glycosyltransferase 28 family. MurG subfamily.

It is found in the cell inner membrane. The catalysed reaction is di-trans,octa-cis-undecaprenyl diphospho-N-acetyl-alpha-D-muramoyl-L-alanyl-D-glutamyl-meso-2,6-diaminopimeloyl-D-alanyl-D-alanine + UDP-N-acetyl-alpha-D-glucosamine = di-trans,octa-cis-undecaprenyl diphospho-[N-acetyl-alpha-D-glucosaminyl-(1-&gt;4)]-N-acetyl-alpha-D-muramoyl-L-alanyl-D-glutamyl-meso-2,6-diaminopimeloyl-D-alanyl-D-alanine + UDP + H(+). It participates in cell wall biogenesis; peptidoglycan biosynthesis. Functionally, cell wall formation. Catalyzes the transfer of a GlcNAc subunit on undecaprenyl-pyrophosphoryl-MurNAc-pentapeptide (lipid intermediate I) to form undecaprenyl-pyrophosphoryl-MurNAc-(pentapeptide)GlcNAc (lipid intermediate II). This Christiangramia forsetii (strain DSM 17595 / CGMCC 1.15422 / KT0803) (Gramella forsetii) protein is UDP-N-acetylglucosamine--N-acetylmuramyl-(pentapeptide) pyrophosphoryl-undecaprenol N-acetylglucosamine transferase.